We begin with the raw amino-acid sequence, 44 residues long: Thymosin beta-10 (44 aa).

Belongs to the thymosin beta family.

The protein resides in the cytoplasm. It is found in the cytoskeleton. In terms of biological role, plays an important role in the organization of the cytoskeleton. Binds to and sequesters actin monomers (G actin) and therefore inhibits actin polymerization. This is Thymosin beta-10 from Torpedo marmorata (Marbled electric ray).